A 197-amino-acid chain; its full sequence is Putative peptidyl-prolyl cis-trans isomerase (197 aa).

The 182-residue stretch at 14–195 (GEIKVVMHTN…HDVVIESIDV (182 aa)) folds into the PPIase cyclophilin-type domain.

Belongs to the cyclophilin-type PPIase family.

The catalysed reaction is [protein]-peptidylproline (omega=180) = [protein]-peptidylproline (omega=0). Its function is as follows. PPIases accelerate the folding of proteins. It catalyzes the cis-trans isomerization of proline imidic peptide bonds in oligopeptides. This Staphylococcus aureus (strain COL) protein is Putative peptidyl-prolyl cis-trans isomerase.